The sequence spans 138 residues: Cysteine desulfuration protein SufE (138 aa).

The active-site Cysteine persulfide intermediate is C51.

This sequence belongs to the SufE family. Homodimer. Interacts with SufS.

It is found in the cytoplasm. It participates in cofactor biosynthesis; iron-sulfur cluster biosynthesis. Participates in cysteine desulfuration mediated by SufS. Cysteine desulfuration mobilizes sulfur from L-cysteine to yield L-alanine and constitutes an essential step in sulfur metabolism for biosynthesis of a variety of sulfur-containing biomolecules. Functions as a sulfur acceptor for SufS, by mediating the direct transfer of the sulfur atom from the S-sulfanylcysteine of SufS, an intermediate product of cysteine desulfuration process. The protein is Cysteine desulfuration protein SufE of Escherichia coli O8 (strain IAI1).